The primary structure comprises 411 residues: Calmodulin-binding receptor-like cytoplasmic kinase 2 (411 aa).

Disordered stretches follow at residues 1–44 (MPSR…DTTT) and 66–99 (SNYIDNSKSSSDNNIRSRRSSTGSSSVQRSYGNA). Composition is skewed to low complexity over residues 16–44 (TTSSNYSNTTFTDRSFPTTPARTSTDTTT) and 66–95 (SNYIDNSKSSSDNNIRSRRSSTGSSSVQRS). Threonine 108 bears the Phosphothreonine mark. One can recognise a Protein kinase domain in the interval 119-398 (FSPSFRIGQG…MKKCSEILWG (280 aa)). Residues 125–133 (IGQGGFGTV) and lysine 147 contribute to the ATP site. A caM-binding region spans residues 134-159 (YKVKLRDGKTFAVKRAKKSMHDDRQG). The Proton acceptor role is filled by aspartate 247. Phosphoserine is present on residues serine 251 and serine 283. Residues threonine 284 and threonine 289 each carry the phosphothreonine modification. The residue at position 297 (tyrosine 297) is a Phosphotyrosine.

Belongs to the protein kinase superfamily. Ser/Thr protein kinase family. Interacts with calmodulin (CaM) in a Ca(2+)-dependent manner.

The protein resides in the cytoplasm. The enzyme catalyses L-seryl-[protein] + ATP = O-phospho-L-seryl-[protein] + ADP + H(+). The catalysed reaction is L-threonyl-[protein] + ATP = O-phospho-L-threonyl-[protein] + ADP + H(+). The sequence is that of Calmodulin-binding receptor-like cytoplasmic kinase 2 (CRCK2) from Arabidopsis thaliana (Mouse-ear cress).